We begin with the raw amino-acid sequence, 358 residues long: Phosphoribosyl pyrophosphate synthase-associated protein 2 (358 aa).

The protein belongs to the ribose-phosphate pyrophosphokinase family.

In terms of biological role, seems to play a negative regulatory role in 5-phosphoribose 1-diphosphate synthesis. The sequence is that of Phosphoribosyl pyrophosphate synthase-associated protein 2 (prpsap2) from Xenopus tropicalis (Western clawed frog).